The following is a 236-amino-acid chain: 2-C-methyl-D-erythritol 4-phosphate cytidylyltransferase (236 aa).

Belongs to the IspD/TarI cytidylyltransferase family. IspD subfamily.

It carries out the reaction 2-C-methyl-D-erythritol 4-phosphate + CTP + H(+) = 4-CDP-2-C-methyl-D-erythritol + diphosphate. It functions in the pathway isoprenoid biosynthesis; isopentenyl diphosphate biosynthesis via DXP pathway; isopentenyl diphosphate from 1-deoxy-D-xylulose 5-phosphate: step 2/6. Functionally, catalyzes the formation of 4-diphosphocytidyl-2-C-methyl-D-erythritol from CTP and 2-C-methyl-D-erythritol 4-phosphate (MEP). The protein is 2-C-methyl-D-erythritol 4-phosphate cytidylyltransferase of Symbiobacterium thermophilum (strain DSM 24528 / JCM 14929 / IAM 14863 / T).